Consider the following 656-residue polypeptide: uncharacterized protein (656 aa).

Positions 623–656 are disordered; that stretch reads EIDIPGTPASIDPEWSRPPGSITDDHVFDAPLHR. The segment covering 645–656 has biased composition (basic and acidic residues); sequence TDDHVFDAPLHR.

This is an uncharacterized protein from Mycobacterium tuberculosis (strain ATCC 25618 / H37Rv).